Consider the following 382-residue polypeptide: Na(+)/H(+) antiporter NhaA (382 aa).

11 consecutive transmembrane segments (helical) span residues 14 to 34 (AGGI…NSSL), 49 to 69 (MSVS…LIGL), 87 to 107 (IFPA…YVAF), 117 to 137 (GWAI…ALLG), 146 to 166 (VFLL…IAFF), 171 to 191 (LSVL…LLNA), 205 to 225 (FILW…GVVL), 252 to 272 (VAFA…LEGV), 285 to 305 (VALG…YLAV), 321 to 341 (IFAV…ISSL), and 356 to 376 (LGIL…LSIS).

The protein belongs to the NhaA Na(+)/H(+) (TC 2.A.33) antiporter family.

It localises to the cell inner membrane. The catalysed reaction is Na(+)(in) + 2 H(+)(out) = Na(+)(out) + 2 H(+)(in). Functionally, na(+)/H(+) antiporter that extrudes sodium in exchange for external protons. The protein is Na(+)/H(+) antiporter NhaA of Aliivibrio fischeri (strain ATCC 700601 / ES114) (Vibrio fischeri).